The primary structure comprises 60 residues: Metallothionein A (60 aa).

The tract at residues 1 to 28 (MDPCQCSKSGTCNCGGSCTCTNCSCKSC) is beta. A divalent metal cation is bound by residues cysteine 4, cysteine 6, cysteine 12, cysteine 14, cysteine 18, cysteine 20, cysteine 23, cysteine 25, cysteine 28, cysteine 32, cysteine 33, cysteine 35, cysteine 36, cysteine 40, cysteine 43, cysteine 47, cysteine 49, cysteine 54, cysteine 58, and cysteine 59. The interval 29 to 60 (KKSCCPCCPSGCTKCASGCVCKGKTCDTSCCQ) is alpha.

This sequence belongs to the metallothionein superfamily. Type 1 family.

Functionally, metallothioneins have a high content of cysteine residues that bind various heavy metals. This chain is Metallothionein A (mta), found in Trematomus bernacchii (Emerald rockcod).